Here is a 158-residue protein sequence, read N- to C-terminus: NADH-quinone oxidoreductase subunit B (158 aa).

The [4Fe-4S] cluster site is built by Cys37, Cys38, Cys102, and Cys132.

It belongs to the complex I 20 kDa subunit family. As to quaternary structure, NDH-1 is composed of 14 different subunits. Subunits NuoB, C, D, E, F, and G constitute the peripheral sector of the complex. It depends on [4Fe-4S] cluster as a cofactor.

The protein resides in the cell inner membrane. The enzyme catalyses a quinone + NADH + 5 H(+)(in) = a quinol + NAD(+) + 4 H(+)(out). NDH-1 shuttles electrons from NADH, via FMN and iron-sulfur (Fe-S) centers, to quinones in the respiratory chain. Couples the redox reaction to proton translocation (for every two electrons transferred, four hydrogen ions are translocated across the cytoplasmic membrane), and thus conserves the redox energy in a proton gradient. This chain is NADH-quinone oxidoreductase subunit B, found in Leptothrix cholodnii (strain ATCC 51168 / LMG 8142 / SP-6) (Leptothrix discophora (strain SP-6)).